The following is a 731-amino-acid chain: EF-hand calcium-binding domain-containing protein 4B (731 aa).

Residues 1–45 are disordered; it reads MAAPDGRVVSRPQRLGQGSGQGPKGSGACLHPLDSLEQKETQEQT. The EF-hand domain maps to 84-119; that stretch reads LSLEELEDVFDALDADGNGYLTPQEFTTGFSHFFFS. Ca(2+)-binding residues include Asp97, Asp99, Asn101, Tyr103, and Glu108. Positions 201-382 form a coiled coil; it reads LTRIISQLQE…RERNKHLRDE (182 aa). Residues 349–540 are proline-rich domain (PRD) which mediates interaction with VAV1; the sequence is MEVYRVTESL…ALCKEESSPS (192 aa). Disordered stretches follow at residues 426–466 and 494–528; these read SEEE…PYPR and CSEEEEVSDQGVQGQIPEAPPLKLTPTSPRGQPVG. GTP is bound by residues Ser554, Val556, Gly557, Lys558, Thr559, Ser560, Ser571, Pro572, and Thr577. Thr559 lines the Mg(2+) pocket. Residues 572 to 580 form a switch-I region; sequence PGMAATVGI. Mg(2+)-binding residues include Thr577 and Asp600. GTP contacts are provided by Gly603, Asn658, Lys659, Asp661, and Ala689. The interval 603-619 is switch-II; sequence GQERYRCITQQFFRKAD. Cys729 carries the S-geranylgeranyl cysteine lipid modification.

This sequence belongs to the EFCAB4 family. Interacts with ORAI1 and STIM1; the interaction is direct and takes place in absence of Ca(2+). Forms a complex with ORAI1 and STIM1 at low concentration of Ca(2+), the complex dissociates at elevated Ca(2+) concentrations. Interacts with ORAI2 and ORAI3. In terms of assembly, interacts with DYNC1H1. Interacts with the dynein-dynactin complex in a Ca(2+)-dependent manner. Interacts with VAV1. Mg(2+) serves as cofactor. As to expression, expressed in the Jurkat T-cell line. In terms of tissue distribution, expressed in endothelial cells. Expressed in Weibel-Palade bodies (which are P-selectin/SELP negative) in endothelial cells. Expressed in the Jurkat T-cell line.

It localises to the cytoplasm. Its subcellular location is the cytoskeleton. The protein localises to the microtubule organizing center. The protein resides in the cell membrane. It is found in the golgi apparatus membrane. It localises to the golgi apparatus. Its subcellular location is the trans-Golgi network membrane. The protein localises to the vesicle. The enzyme catalyses GTP + H2O = GDP + phosphate + H(+). Functionally, ca(2+)-binding protein that plays a key role in store-operated Ca(2+) entry (SOCE) in T-cells by regulating CRAC channel activation. Acts as a cytoplasmic calcium-sensor that facilitates the clustering of ORAI1 and STIM1 at the junctional regions between the plasma membrane and the endoplasmic reticulum upon low Ca(2+) concentration. It thereby regulates CRAC channel activation, including translocation and clustering of ORAI1 and STIM1. Upon increase of cytoplasmic Ca(2+) resulting from opening of CRAC channels, dissociates from ORAI1 and STIM1, thereby destabilizing the ORAI1-STIM1 complex. Rab GTPase that mediates the trafficking of Weibel-Palade bodies (WPBs) to microtubule organizing center (MTOC) in endothelial cells in response to acute inflammatory stimuli. During histamine (but not thrombin) stimulation of endothelial cells, the dynein-bound form induces retrograde transport of a subset of WPBs along microtubules to the MTOC in a Ca(2+)-independent manner and its GTPase activity is essential for this function. Ca(2+)-regulated dynein adapter protein that activates dynein-mediated transport and dynein-dynactin motility on microtubules and regulates endosomal trafficking of CD47. Acts as an intracellular signaling module bridging two important T-cell receptor (TCR) signaling pathways, Ca(2+)-NFAT and JNK, to affect T-cell activation. In resting T-cells, is predominantly localized near TGN network in a GTP-bound form, upon TCR stimulation, localizes at the immunological synapse via interaction with VAV1 to activate downstream Ca(2+)-NFAT and JNK signaling pathways. Plays a role in T-helper 1 (Th1) cell differentiation and T-helper 17 (Th17) cell effector function. Plays a role in store-operated Ca(2+) entry (SOCE) in T-cells by regulating CRAC channel activation. This Homo sapiens (Human) protein is EF-hand calcium-binding domain-containing protein 4B.